A 515-amino-acid chain; its full sequence is Signal transduction histidine-protein kinase/phosphatase MprB (515 aa).

Residues 1–24 are Cytoplasmic-facing; that stretch reads MTLPPQPSRLKPPRNTSSLSLRWR. The helical transmembrane segment at 25 to 45 threads the bilayer; sequence VMLLAMSMVAMVVVLMSVAVY. At 46–165 the chain is on the extracellular side; the sequence is AVVSRALYDD…TGQVLGRLGT (120 aa). The helical transmembrane segment at 166–186 threads the bilayer; it reads VLLIVGGVGVAVAAIAGGMVA. Residues 187–239 form the HAMP domain; that stretch reads RAGLRPVGRLTQAAERVARTDDLRPIPVFGSDELARLTEAFNMMLRALTESRE. Residues 187-515 lie on the Cytoplasmic side of the membrane; the sequence is RAGLRPVGRL…GKSRSASKEL (329 aa). A Histidine kinase domain is found at 247 to 467; the sequence is DAGHELRTPL…SFYVMLPGRP (221 aa). The residue at position 250 (His250) is a Phosphohistidine; by autocatalysis. Positions 468–515 are disordered; sequence LTPGGNGTAPVPAAQFDPDMRSAGSRADRRVIKNTETNGKSRSASKEL.

The cofactor is Mg(2+). Mn(2+) serves as cofactor. In terms of processing, autophosphorylated.

The protein resides in the cell membrane. The catalysed reaction is ATP + protein L-histidine = ADP + protein N-phospho-L-histidine.. Its function is as follows. Member of the two-component regulatory system MprB/MprA which contributes to maintaining a balance among several systems involved in stress resistance and is required for establishment and maintenance of persistent infection in the host. In response to environmental signals MprB acts both as a membrane-associated protein kinase that undergoes autophosphorylation and subsequently transfers the phosphate to MprA, and a protein phosphatase that dephosphorylates phospho-MprA. This chain is Signal transduction histidine-protein kinase/phosphatase MprB (mprB), found in Mycobacterium sp. (strain JLS).